A 114-amino-acid polypeptide reads, in one-letter code: Adapter SH3BGRL (114 aa).

The segment at 13–50 is required for interaction with HER2; the sequence is STAIKKKQQDVLGFLEANKIGFEEKDIAANEENRKWMR. Residues 54–71 form a required for interaction with PFN1, HER2, and ATG12 region; the sequence is PENSRPATGYPLPPQIFN. Residues 61-67 carry the SH3-binding motif; sequence TGYPLPP.

The protein belongs to the SH3BGR family. In terms of assembly, monomer. Interacts with PFN1/Profilin-1. Interacts with ERBB2. Interacts with ATG12. Interacts with BECN1. Interacts with translating ribosomes. Ubiquitous.

The protein localises to the cytoplasm. Its subcellular location is the cytosol. It is found in the cell membrane. Functionally, appears to function as an adapter protein that bridges proteins together or proteins with mRNAs. May function as a ubiquitin ligase-substrate adapter. Additionally, associates with translating cytoplasmic ribosomes and may promote the expression of specific mRNAs. This is Adapter SH3BGRL from Homo sapiens (Human).